The primary structure comprises 32 residues: Defensin-3 (32 aa).

Intrachain disulfides connect C3–C31, C5–C20, and C10–C30.

The protein resides in the secreted. Its function is as follows. Has antibacterial activity against the Gram-negative bacterium E.coli and the Gram-positive bacteria L.monocytogenes and S.aureus. Has antifungal activity against C.albicans. In Papio hamadryas (Hamadryas baboon), this protein is Defensin-3.